Consider the following 178-residue polypeptide: Oligoribonuclease (178 aa).

In terms of domain architecture, Exonuclease spans 7–168 (LIWIDLEMTG…DDIRESIAEL (162 aa)). Residue Tyr-128 is part of the active site.

This sequence belongs to the oligoribonuclease family.

It is found in the cytoplasm. Functionally, 3'-to-5' exoribonuclease specific for small oligoribonucleotides. The sequence is that of Oligoribonuclease from Francisella tularensis subsp. tularensis (strain FSC 198).